A 450-amino-acid polypeptide reads, in one-letter code: Probable glycine dehydrogenase (decarboxylating) subunit 1 (450 aa).

It belongs to the GcvP family. N-terminal subunit subfamily. The glycine cleavage system is composed of four proteins: P, T, L and H. In this organism, the P 'protein' is a heterodimer of two subunits.

It catalyses the reaction N(6)-[(R)-lipoyl]-L-lysyl-[glycine-cleavage complex H protein] + glycine + H(+) = N(6)-[(R)-S(8)-aminomethyldihydrolipoyl]-L-lysyl-[glycine-cleavage complex H protein] + CO2. Its function is as follows. The glycine cleavage system catalyzes the degradation of glycine. The P protein binds the alpha-amino group of glycine through its pyridoxal phosphate cofactor; CO(2) is released and the remaining methylamine moiety is then transferred to the lipoamide cofactor of the H protein. This is Probable glycine dehydrogenase (decarboxylating) subunit 1 from Desulfotalea psychrophila (strain LSv54 / DSM 12343).